Here is a 225-residue protein sequence, read N- to C-terminus: Single-pass membrane and coiled-coil domain-containing protein 3 (225 aa).

A coiled-coil region spans residues 62–92 (IKENCDLIIQAIMKIQKELQKVDEALKDKLE). The helical transmembrane segment at 155–175 (IGASLLGSIGVAVLGLGIDMI) threads the bilayer. A coiled-coil region spans residues 183 to 207 (VEKTQLQAAIKSYEKHLVEFKSASE).

Its subcellular location is the membrane. The polypeptide is Single-pass membrane and coiled-coil domain-containing protein 3 (SMCO3) (Homo sapiens (Human)).